Here is an 80-residue protein sequence, read N- to C-terminus: Teretoxin Tsu6.5 (80 aa).

Residues 1–21 form the signal peptide; that stretch reads MAINGRLLCLCLVLGLVFESL. A propeptide spanning residues 22 to 42 is cleaved from the precursor; that stretch reads GHPSVQEKRAAEDSKPSGERR.

It belongs to the teretoxin M (TM) superfamily. Post-translationally, contains 3 disulfide bonds. As to expression, expressed by the venom duct.

The protein resides in the secreted. The chain is Teretoxin Tsu6.5 from Terebra subulata (Chocolate spotted auger).